Consider the following 426-residue polypeptide: Serine--tRNA ligase (426 aa).

Threonine 233 to glutamate 235 is a binding site for L-serine. ATP is bound at residue arginine 264–glutamate 266. Glutamate 287 contacts L-serine. Residue glutamate 351 to serine 354 coordinates ATP. Serine 387 lines the L-serine pocket.

This sequence belongs to the class-II aminoacyl-tRNA synthetase family. Type-1 seryl-tRNA synthetase subfamily. In terms of assembly, homodimer. The tRNA molecule binds across the dimer.

The protein localises to the cytoplasm. The enzyme catalyses tRNA(Ser) + L-serine + ATP = L-seryl-tRNA(Ser) + AMP + diphosphate + H(+). It carries out the reaction tRNA(Sec) + L-serine + ATP = L-seryl-tRNA(Sec) + AMP + diphosphate + H(+). It participates in aminoacyl-tRNA biosynthesis; selenocysteinyl-tRNA(Sec) biosynthesis; L-seryl-tRNA(Sec) from L-serine and tRNA(Sec): step 1/1. Functionally, catalyzes the attachment of serine to tRNA(Ser). Is also able to aminoacylate tRNA(Sec) with serine, to form the misacylated tRNA L-seryl-tRNA(Sec), which will be further converted into selenocysteinyl-tRNA(Sec). This is Serine--tRNA ligase from Pseudomonas paraeruginosa (strain DSM 24068 / PA7) (Pseudomonas aeruginosa (strain PA7)).